We begin with the raw amino-acid sequence, 351 residues long: S-adenosylmethionine:tRNA ribosyltransferase-isomerase (351 aa).

Belongs to the QueA family. As to quaternary structure, monomer.

Its subcellular location is the cytoplasm. The enzyme catalyses 7-aminomethyl-7-carbaguanosine(34) in tRNA + S-adenosyl-L-methionine = epoxyqueuosine(34) in tRNA + adenine + L-methionine + 2 H(+). It participates in tRNA modification; tRNA-queuosine biosynthesis. In terms of biological role, transfers and isomerizes the ribose moiety from AdoMet to the 7-aminomethyl group of 7-deazaguanine (preQ1-tRNA) to give epoxyqueuosine (oQ-tRNA). The polypeptide is S-adenosylmethionine:tRNA ribosyltransferase-isomerase (Phocaeicola vulgatus (strain ATCC 8482 / DSM 1447 / JCM 5826 / CCUG 4940 / NBRC 14291 / NCTC 11154) (Bacteroides vulgatus)).